The primary structure comprises 95 residues: Putative monooxygenase YcnE (95 aa).

The ABM domain occupies I2–L93. S24 carries the post-translational modification Phosphoserine.

Belongs to the LsrG family.

Its function is as follows. Putative monooxygenase that may contribute to the degradation of aromatic compounds. In Bacillus subtilis (strain 168), this protein is Putative monooxygenase YcnE (ycnE).